The chain runs to 273 residues: 2,3,4,5-tetrahydropyridine-2,6-dicarboxylate N-succinyltransferase (273 aa).

Substrate-binding residues include Arg104 and Asp141.

This sequence belongs to the transferase hexapeptide repeat family. Homotrimer.

The protein localises to the cytoplasm. It carries out the reaction (S)-2,3,4,5-tetrahydrodipicolinate + succinyl-CoA + H2O = (S)-2-succinylamino-6-oxoheptanedioate + CoA. It participates in amino-acid biosynthesis; L-lysine biosynthesis via DAP pathway; LL-2,6-diaminopimelate from (S)-tetrahydrodipicolinate (succinylase route): step 1/3. This Buchnera aphidicola subsp. Schizaphis graminum (strain Sg) protein is 2,3,4,5-tetrahydropyridine-2,6-dicarboxylate N-succinyltransferase.